Reading from the N-terminus, the 262-residue chain is Shikimate dehydrogenase (NADP(+)) (262 aa).

Shikimate is bound by residues serine 15–serine 17 and threonine 62. Lysine 66 acts as the Proton acceptor in catalysis. Residue glutamate 78 coordinates NADP(+). Positions 87 and 102 each coordinate shikimate. NADP(+) contacts are provided by residues glycine 126 to alanine 130, asparagine 150 to arginine 155, and methionine 214. Shikimate is bound at residue tyrosine 216. Glycine 236 contributes to the NADP(+) binding site.

This sequence belongs to the shikimate dehydrogenase family. Homodimer.

The enzyme catalyses shikimate + NADP(+) = 3-dehydroshikimate + NADPH + H(+). The protein operates within metabolic intermediate biosynthesis; chorismate biosynthesis; chorismate from D-erythrose 4-phosphate and phosphoenolpyruvate: step 4/7. Functionally, involved in the biosynthesis of the chorismate, which leads to the biosynthesis of aromatic amino acids. Catalyzes the reversible NADPH linked reduction of 3-dehydroshikimate (DHSA) to yield shikimate (SA). This is Shikimate dehydrogenase (NADP(+)) from Acinetobacter baumannii (strain AB307-0294).